The following is a 398-amino-acid chain: Ornithine aminotransferase (398 aa).

Lysine 255 is modified (N6-(pyridoxal phosphate)lysine).

Belongs to the class-III pyridoxal-phosphate-dependent aminotransferase family. OAT subfamily. It depends on pyridoxal 5'-phosphate as a cofactor.

The protein localises to the cytoplasm. It carries out the reaction a 2-oxocarboxylate + L-ornithine = L-glutamate 5-semialdehyde + an L-alpha-amino acid. Its pathway is amino-acid biosynthesis; L-proline biosynthesis; L-glutamate 5-semialdehyde from L-ornithine: step 1/1. Catalyzes the interconversion of ornithine to glutamate semialdehyde. In Geobacillus sp. (strain WCH70), this protein is Ornithine aminotransferase.